A 394-amino-acid polypeptide reads, in one-letter code: Elongation factor Tu (394 aa).

Positions Lys-10–Gln-204 constitute a tr-type G domain. Positions Gly-19 to Thr-26 are G1. Gly-19 to Thr-26 serves as a coordination point for GTP. Thr-26 contacts Mg(2+). Residues Gly-60–Asn-64 form a G2 region. The interval Asp-81 to Gly-84 is G3. GTP-binding positions include Asp-81–His-85 and Asn-136–Asp-139. A G4 region spans residues Asn-136 to Asp-139. The G5 stretch occupies residues Ser-174–Leu-176.

It belongs to the TRAFAC class translation factor GTPase superfamily. Classic translation factor GTPase family. EF-Tu/EF-1A subfamily. Monomer.

The protein localises to the cytoplasm. The catalysed reaction is GTP + H2O = GDP + phosphate + H(+). Functionally, GTP hydrolase that promotes the GTP-dependent binding of aminoacyl-tRNA to the A-site of ribosomes during protein biosynthesis. This Shewanella putrefaciens (Pseudomonas putrefaciens) protein is Elongation factor Tu.